A 149-amino-acid polypeptide reads, in one-letter code: Nucleoside diphosphate kinase 1 (149 aa).

Lysine 9, phenylalanine 57, arginine 85, threonine 91, arginine 102, and asparagine 112 together coordinate ATP. Catalysis depends on histidine 115, which acts as the Pros-phosphohistidine intermediate.

Belongs to the NDK family. Requires Mg(2+) as cofactor. Post-translationally, autophosphorylated.

It carries out the reaction a 2'-deoxyribonucleoside 5'-diphosphate + ATP = a 2'-deoxyribonucleoside 5'-triphosphate + ADP. The catalysed reaction is a ribonucleoside 5'-diphosphate + ATP = a ribonucleoside 5'-triphosphate + ADP. Functionally, major role in the synthesis of nucleoside triphosphates other than ATP. The ATP gamma phosphate is transferred to the NDP beta phosphate via a ping-pong mechanism, using a phosphorylated active-site intermediate. Also exhibits a kinase-like activity towards histone H1. This Saccharum officinarum (Sugarcane) protein is Nucleoside diphosphate kinase 1 (NDPK1).